The primary structure comprises 526 residues: Probable Xaa-Pro aminopeptidase GLRG_02280 (526 aa).

The Mn(2+) site is built by D285, D296, E454, and E495.

The protein belongs to the peptidase M24B family. Mn(2+) is required as a cofactor.

It catalyses the reaction Release of any N-terminal amino acid, including proline, that is linked to proline, even from a dipeptide or tripeptide.. In terms of biological role, catalyzes the removal of a penultimate prolyl residue from the N-termini of peptides. This chain is Probable Xaa-Pro aminopeptidase GLRG_02280, found in Colletotrichum graminicola (strain M1.001 / M2 / FGSC 10212) (Maize anthracnose fungus).